Consider the following 318-residue polypeptide: Taste receptor type 2 member 117 (318 aa).

The Extracellular segment spans residues 1 to 16; that stretch reads MQHNLKTIFVISHSTL. A helical membrane pass occupies residues 17 to 37; that stretch reads TIILFTELVTGIIGNGFMALV. Over 38 to 53 the chain is Cytoplasmic; it reads HCMDWLRRKKISLVNQ. The chain crosses the membrane as a helical span at residues 54-74; it reads ILTALAISRIFQLCLLFISLV. Over 75 to 93 the chain is Extracellular; that stretch reads ISFSYPDLTTTSLIKVTCN. A helical transmembrane segment spans residues 94–114; that stretch reads LWIIVNHFNIWLATCLGIFYF. Residues 115-134 lie on the Cytoplasmic side of the membrane; it reads LKISNFSNSLFLYLKWRVEK. A helical transmembrane segment spans residues 135–155; the sequence is VVLVTLLVSLVLLTLNSLLIN. Residues 156–189 are Extracellular-facing; it reads LEINICINEYQRNITYSFNSYYHANCHRQMLSLH. A glycan (N-linked (GlcNAc...) asparagine) is linked at Asn168. A helical transmembrane segment spans residues 190–210; the sequence is IIFLSVPFVLSLSTFLLLIFS. The Cytoplasmic segment spans residues 211–238; that stretch reads LGTHHKKMQQHVQGRRDASTMAHFKALQ. The chain crosses the membrane as a helical span at residues 239-259; sequence TVIAFLLLYSIFILSVLVQIW. Topologically, residues 260-268 are extracellular; it reads KYELLKKNL. The helical transmembrane segment at 269 to 289 threads the bilayer; it reads FILFCQVAYVAFPSFHSYILI. Residues 290-318 are Cytoplasmic-facing; the sequence is LGDMKMRQACLSVLWWQKFRKNYVEPLDL.

It belongs to the G-protein coupled receptor T2R family.

It localises to the membrane. Its function is as follows. Putative taste receptor which may play a role in the perception of bitterness. This is Taste receptor type 2 member 117 from Rattus norvegicus (Rat).